The chain runs to 1299 residues: MAP3K epsilon protein kinase 1 (1299 aa).

One can recognise a Protein kinase domain in the interval 20–274; the sequence is YMLGDEIGKG…AKTLLSHPWI (255 aa). HEAT repeat units follow at residues 25 to 62 and 86 to 125; these read EIGK…EDLN and LKTK…TVYI. ATP contacts are provided by residues 26 to 34 and K49; that span reads IGKGAYGRV. Residue D144 is the Proton acceptor of the active site. An HEAT 3 repeat occupies 218–256; the sequence is PYYDLQPMPALFRIVQDDSPPIPDSLSPDITDFLRQCFK. Disordered regions lie at residues 291 to 458 and 483 to 509; these read IRYM…GNEL and GKLN…DGGK. The span at 374–385 shows a compositional bias: low complexity; it reads SSLQSSTCSISS. Composition is skewed to polar residues over residues 415–432 and 488–501; these read ATKQ…QRSH and ASAS…NQGD. HEAT repeat units lie at residues 532-570, 611-649, 653-694, 698-736, 743-780, 781-820, 868-900, 901-939, 955-994, 998-1036, 1043-1081, 1085-1122, 1125-1164, 1186-1210, 1211-1249, and 1279-1299; these read SNDG…LLPL, VFVT…DNID, NACL…SSSL, MFIA…VFKL, NDFC…SGQL, DQHE…PDGD, QPEQ…HIAG, LEKH…AASA, SDTS…ADTT, YMCS…DPNC, ADAI…INKR, QAAE…ASRN, EQLR…NDNR, CPER…RINT, TLAV…HHPR, and QVLV…NTVL. Residues 795 to 852 are disordered; sequence VLKTRPGGGEEPSNSQRSDLYQPDGDRPRSSSAALDATEDVKQHHRISISSNRTSTDK.

Belongs to the protein kinase superfamily. Ser/Thr protein kinase family. Post-translationally, autophosphorylated. As to expression, expressed in both the sporophytic and the gametophytic tissues, especially in dividing cells.

Its subcellular location is the cytoplasm. It is found in the cytoskeleton. The protein resides in the microtubule organizing center. The protein localises to the nucleus. It localises to the nucleolus. Its subcellular location is the cell membrane. The enzyme catalyses L-seryl-[protein] + ATP = O-phospho-L-seryl-[protein] + ADP + H(+). It carries out the reaction L-threonyl-[protein] + ATP = O-phospho-L-threonyl-[protein] + ADP + H(+). Functionally, serine/threonine-protein kinase involved in the spatial and temporal control system organizing cortical activities in mitotic and postmitotic cells. Required for the normal functioning of the plasma membrane in developing pollen. Involved in the regulation of cell expansion and embryo development. This Brassica napus (Rape) protein is MAP3K epsilon protein kinase 1.